A 156-amino-acid polypeptide reads, in one-letter code: MKRKYYWIYINIIFFIITVDFYSKKWILNHLNIYEKQKVFFILNLFHVHNFGAAFSILSDQNGWQKYFLLIFSIIIILAIIKIMIKFKKKDKNKILSYSLILAGAIGNLIDRINYGFVIDFIDLHFKSWHFATFNIADFSIFIGMIMIIKKNYYNS.

A run of 4 helical transmembrane segments spans residues I8–L28, V39–S59, Y67–F87, and S99–I119. Catalysis depends on residues D120 and D138. Residues W129–I149 form a helical membrane-spanning segment.

It belongs to the peptidase A8 family.

It is found in the cell inner membrane. It carries out the reaction Release of signal peptides from bacterial membrane prolipoproteins. Hydrolyzes -Xaa-Yaa-Zaa-|-(S,diacylglyceryl)Cys-, in which Xaa is hydrophobic (preferably Leu), and Yaa (Ala or Ser) and Zaa (Gly or Ala) have small, neutral side chains.. Its pathway is protein modification; lipoprotein biosynthesis (signal peptide cleavage). Functionally, this protein specifically catalyzes the removal of signal peptides from prolipoproteins. This chain is Lipoprotein signal peptidase, found in Buchnera aphidicola subsp. Schizaphis graminum (strain Sg).